We begin with the raw amino-acid sequence, 183 residues long: Translation initiation factor IF-3 (183 aa).

Belongs to the IF-3 family. In terms of assembly, monomer.

It is found in the cytoplasm. IF-3 binds to the 30S ribosomal subunit and shifts the equilibrium between 70S ribosomes and their 50S and 30S subunits in favor of the free subunits, thus enhancing the availability of 30S subunits on which protein synthesis initiation begins. This is Translation initiation factor IF-3 from Vibrio cholerae serotype O1 (strain ATCC 39315 / El Tor Inaba N16961).